The primary structure comprises 571 residues: MRTTNYLLSTQKEAPSDAVIVSHQLMLRAGMIRKLASGLYTWLPTGLRVLRKVETIVREEMERAGGVEVLMPIVQPADLWLETGRWDQYGGELLRIKDRHTRDFVLGPTHEEVITELVRKEVNSYKQLPLNLFQIQTKFRDETRPRFGVMRAREFTMKDAYSFHMDQACLEKTYQKMFDAYCRIFDRLGLEYRPVIADTGSIGGSASHEFHVLAQSGEDAIVFSTESDYAANIEKAEALAPSTVLAAPTAEMGLLDTPNAKTIAELVSKHGIAIEKTVKTLFVKASDQIETELIALIIRGDHELNEIKAENLASVAAPLEFASESEIRALVNAGPGSLGPVSLPVPFIVDRSVAVMSDFSAGANIDNKHYCNINWGRDVELAQVEDLRNVVEGDPSPCGSGTLSMARGIEVGHIFQLGDTYTKAMNAGVLNQQGKNQILTMGCYGIGISRIVAAAIEQNNDKNGIIWNNTLAPFSVVIVPMNMHKSHRVAELAEKYYAELQAAGIEVLFDDRKERPGIMFADAELMGIPHTLVIGDRSLDNGVIEYKDRLSGVKQEVAIDEVINFIKAQLA.

The protein belongs to the class-II aminoacyl-tRNA synthetase family. ProS type 1 subfamily. As to quaternary structure, homodimer.

The protein resides in the cytoplasm. It carries out the reaction tRNA(Pro) + L-proline + ATP = L-prolyl-tRNA(Pro) + AMP + diphosphate. In terms of biological role, catalyzes the attachment of proline to tRNA(Pro) in a two-step reaction: proline is first activated by ATP to form Pro-AMP and then transferred to the acceptor end of tRNA(Pro). As ProRS can inadvertently accommodate and process non-cognate amino acids such as alanine and cysteine, to avoid such errors it has two additional distinct editing activities against alanine. One activity is designated as 'pretransfer' editing and involves the tRNA(Pro)-independent hydrolysis of activated Ala-AMP. The other activity is designated 'posttransfer' editing and involves deacylation of mischarged Ala-tRNA(Pro). The misacylated Cys-tRNA(Pro) is not edited by ProRS. In Psychromonas ingrahamii (strain DSM 17664 / CCUG 51855 / 37), this protein is Proline--tRNA ligase.